Reading from the N-terminus, the 180-residue chain is uncharacterized protein (180 aa).

The protein resides in the mitochondrion. This is an uncharacterized protein from Marchantia polymorpha (Common liverwort).